A 233-amino-acid polypeptide reads, in one-letter code: MLEKCPIIALDFSDLASVTTFLEHFPKEELLFVKIGMELYYSEGPSIIRYIKSLGHRIFLDLKLHDIPNTVRSSMSVLAKLGIDMTNVHAAGGVEMMKAAREGLGEGPILLAVTQLTSTSQEQMQVDQHINLSVVDSVCHYAQKAQEAGLDGVVASAQEVKQIKKQTNEHFICLTPGIRPPQTNQLDDQKRTMTPEQARIVGADYIVVGRPITKAENPYQAYLEIKEEWNRIK.

Residues Asp11, Lys34, 61–70, Thr117, Arg179, Gln189, Gly209, and Arg210 each bind substrate; that span reads DLKLHDIPNT. Residue Lys63 is the Proton donor of the active site.

This sequence belongs to the OMP decarboxylase family. Type 1 subfamily. As to quaternary structure, homodimer.

It catalyses the reaction orotidine 5'-phosphate + H(+) = UMP + CO2. It participates in pyrimidine metabolism; UMP biosynthesis via de novo pathway; UMP from orotate: step 2/2. Its function is as follows. Catalyzes the decarboxylation of orotidine 5'-monophosphate (OMP) to uridine 5'-monophosphate (UMP). In Streptococcus agalactiae serotype III (strain NEM316), this protein is Orotidine 5'-phosphate decarboxylase.